We begin with the raw amino-acid sequence, 208 residues long: MGGKWSKRMSGWSAVRERMKRAEPAEPAADGVGAVSRDLEKHGAITSSNTAANNADCAWLEAQEDEDVGFPVRPQVPLRPMTYKAALDLSHFLKEKGGLEGLIYSQKRQDILDLWIHHTQGYFPDWQNYTPGPGIRYPLTFGWCFKLVPVDPDYVEEANAGENNSLLHPMSQHGMDDPEKEVLVWRFDSRLAFHHMARELHPEYYKDC.

Residues 1-33 are disordered; the sequence is MGGKWSKRMSGWSAVRERMKRAEPAEPAADGVG. G2 carries N-myristoyl glycine; by host lipidation. S6 bears the Phosphoserine; by host mark. The segment covering 15–24 has biased composition (basic and acidic residues); that stretch reads VRERMKRAEP. Positions 64-67 are acidic; interacts with host PACS1 and PACS2; stabilizes the interaction of NEF/MHC-I with host AP1M1; necessary for MHC-I internalization; the sequence is EDED. The interval 71–80 is SH3-binding; interaction with Src family tyrosine kinases; it reads PVRPQVPLRP. The PxxP; stabilizes the interaction of NEF/MHC-I with host AP1M1; necessary for MHC-I internalization signature appears at 74–77; sequence PQVP. The segment at 110–126 is mediates dimerization, Nef-PTE1 interaction; it reads DILDLWIHHTQGYFPDW. The tract at residues 150 to 182 is binding to ATP6V1H; it reads VDPDYVEEANAGENNSLLHPMSQHGMDDPEKEV. The Dileucine internalization motif; necessary for CD4 internalization signature appears at 166 to 167; sequence LL. Residues 176–177 carry the Diacidic; necessary for CD4 internalization motif; the sequence is DD.

Belongs to the lentivirus primate group Nef protein family. In terms of assembly, monomer; cytosolic form. Homodimer; membrane bound form. Interacts with Nef associated p21-activated kinase (PAK2); this interaction activates PAK2. Associates with the Nef-MHC-I-AP1 complex; this complex is required for MHC-I internalization. Interacts (via C-terminus) with host PI3-kinase. Interacts with host PACS1; this interaction seems to be weak. Interacts with host PACS2. Interacts with host LCK and MAPK3; these interactions inhibit the kinase activity of the latter. Interacts with host ATP6V1H; this interaction may play a role in CD4 endocytosis. Associates with the CD4-Nef-AP2 complex; this complex is required for CD4 internalization. Interacts with host AP2 subunit alpha and AP2 subunit sigma2. Interacts with TCR-zeta chain; this interaction up-regulates the Fas ligand (FasL) surface expression. Interacts with host HCK, LYN, and SRC; these interactions activate the Src family kinases. Interacts with MAP3K5; this interaction inhibits the Fas and TNFR-mediated death signals. Interacts with beta-COP and PTE1. Interacts with human RACK1; this increases Nef phosphorylation by PKC. Interacts with TP53; this interaction decreases the half-life of TP53, protecting the infected cell against p53-mediated apoptosis. In terms of processing, the virion-associated Nef proteins are cleaved by the viral protease to release the soluble C-terminal core protein. Nef is probably cleaved concomitantly with viral structural proteins on maturation of virus particles. Myristoylated. Post-translationally, phosphorylated on serine residues, probably by host PKCdelta and theta.

The protein localises to the host cell membrane. Its subcellular location is the virion. The protein resides in the secreted. It localises to the host Golgi apparatus membrane. In terms of biological role, factor of infectivity and pathogenicity, required for optimal virus replication. Alters numerous pathways of T-lymphocyte function and down-regulates immunity surface molecules in order to evade host defense and increase viral infectivity. Alters the functionality of other immunity cells, like dendritic cells, monocytes/macrophages and NK cells. In infected CD4(+) T-lymphocytes, down-regulates the surface MHC-I, mature MHC-II, CD4, CD28, CCR5 and CXCR4 molecules. Mediates internalization and degradation of host CD4 through the interaction of with the cytoplasmic tail of CD4, the recruitment of AP-2 (clathrin adapter protein complex 2), internalization through clathrin coated pits, and subsequent transport to endosomes and lysosomes for degradation. Diverts host MHC-I molecules to the trans-Golgi network-associated endosomal compartments by an endocytic pathway to finally target them for degradation. MHC-I down-regulation may involve AP-1 (clathrin adapter protein complex 1) or possibly Src family kinase-ZAP70/Syk-PI3K cascade recruited by PACS2. In consequence infected cells are masked for immune recognition by cytotoxic T-lymphocytes. Decreasing the number of immune receptors also prevents reinfection by more HIV particles (superinfection). Down-regulates host SERINC3 and SERINC5 thereby excluding these proteins from the viral particles. Virion infectivity is drastically higher when SERINC3 or SERINC5 are excluded from the viral envelope, because these host antiviral proteins impair the membrane fusion event necessary for subsequent virion penetration. Its function is as follows. Bypasses host T-cell signaling by inducing a transcriptional program nearly identical to that of anti-CD3 cell activation. Interaction with TCR-zeta chain up-regulates the Fas ligand (FasL). Increasing surface FasL molecules and decreasing surface MHC-I molecules on infected CD4(+) cells send attacking cytotoxic CD8+ T-lymphocytes into apoptosis. Functionally, plays a role in optimizing the host cell environment for viral replication without causing cell death by apoptosis. Protects the infected cells from apoptosis in order to keep them alive until the next virus generation is ready to strike. Inhibits the Fas and TNFR-mediated death signals by blocking MAP3K5/ASK1. Decreases the half-life of TP53, protecting the infected cell against p53-mediated apoptosis. Inhibits the apoptotic signals regulated by the Bcl-2 family proteins through the formation of a Nef/PI3-kinase/PAK2 complex that leads to activation of PAK2 and induces phosphorylation of host BAD. In terms of biological role, extracellular Nef protein targets CD4(+) T-lymphocytes for apoptosis by interacting with CXCR4 surface receptors. This Human immunodeficiency virus type 1 group M subtype B (isolate SF162) (HIV-1) protein is Protein Nef.